The chain runs to 286 residues: NAD kinase (286 aa).

Asp74 (proton acceptor) is an active-site residue. Residues 74 to 75 (DG), 148 to 149 (ND), Asp178, Ala186, 189 to 194 (TAYNLS), and Gln244 contribute to the NAD(+) site.

This sequence belongs to the NAD kinase family. It depends on a divalent metal cation as a cofactor.

It localises to the cytoplasm. The catalysed reaction is NAD(+) + ATP = ADP + NADP(+) + H(+). In terms of biological role, involved in the regulation of the intracellular balance of NAD and NADP, and is a key enzyme in the biosynthesis of NADP. Catalyzes specifically the phosphorylation on 2'-hydroxyl of the adenosine moiety of NAD to yield NADP. This Campylobacter jejuni (strain RM1221) protein is NAD kinase.